Reading from the N-terminus, the 1658-residue chain is Protein TIC 214 (1658 aa).

Transmembrane regions (helical) follow at residues 28–48 (FGLY…ILTI), 52–72 (LLGG…GQLI), 82–102 (IYVM…YMLF), 130–150 (IFLD…SPVF), 165–185 (ISFV…FINL), and 199–219 (VNYP…ILAL).

This sequence belongs to the TIC214 family. As to quaternary structure, part of the Tic complex.

It is found in the plastid. The protein localises to the chloroplast inner membrane. In terms of biological role, involved in protein precursor import into chloroplasts. May be part of an intermediate translocation complex acting as a protein-conducting channel at the inner envelope. This is Protein TIC 214 from Huperzia lucidula (Shining clubmoss).